A 1770-amino-acid polypeptide reads, in one-letter code: Transposon Ty2-F Gag-Pol polyprotein (1770 aa).

3 stretches are compositionally biased toward polar residues: residues 1–11 (MESQQLHQNPH), 19–39 (ASVT…SASN), and 49–60 (KVNSQQETTPGT). Disordered regions lie at residues 1-86 (MESQ…GQYQ) and 359-453 (QHSE…LPDH). The RNA-binding stretch occupies residues 295 to 397 (ENNINVSDRL…SSKPRAAKAH (103 aa)). A compositionally biased stretch (low complexity) spans 369 to 381 (TSPNTTNTKVTTR). Composition is skewed to polar residues over residues 399–408 (IATSSKFSRV) and 415–435 (ESTV…GQQQ). Aspartate 457 (for protease activity; shared with dimeric partner) is an active-site residue. The segment at 579–636 (NVNKSKSVNKYPYPLIHRMLGHANFRSIQKSLKKNAVTYLKESDIEWSNASTYQCPDC) is integrase-type zinc finger-like. The 176-residue stretch at 656–831 (ESYEPFQYLH…AGLDITTILP (176 aa)) folds into the Integrase catalytic domain. Residues aspartate 667 and aspartate 732 each contribute to the Mg(2+) site. Disordered stretches follow at residues 1004-1034 (MGGT…STNE), 1059-1135 (TEEP…KSSK), 1146-1165 (LPLP…VSKD), and 1170-1205 (HSRQ…TEIE). Composition is skewed to polar residues over residues 1009-1034 (ESDT…STNE) and 1065-1082 (QRNS…STPS). The span at 1151–1165 (LTHKSPTDTSDVSKD) shows a compositional bias: basic and acidic residues. The short motif at 1193-1227 (KKRSLEDNETEIEVSRDTWNNKNMRSLEPPRSKKR) is the Bipartite nuclear localization signal element. The Reverse transcriptase Ty1/copia-type domain occupies 1353–1491 (NDYYITQLDI…DILGLEIKYQ (139 aa)). Aspartate 1361, aspartate 1442, aspartate 1443, aspartate 1625, glutamate 1667, and aspartate 1700 together coordinate Mg(2+). Residues 1625-1767 (DASYGNQPYY…IKTFKLLTNK (143 aa)) enclose the RNase H Ty1/copia-type domain.

As to quaternary structure, the capsid protein forms a homotrimer, from which the VLPs are assembled. The protease is a homodimer, whose active site consists of two apposed aspartic acid residues. Initially, virus-like particles (VLPs) are composed of the structural unprocessed proteins Gag and Gag-Pol, and also contain the host initiator methionine tRNA (tRNA(i)-Met) which serves as a primer for minus-strand DNA synthesis, and a dimer of genomic Ty RNA. Processing of the polyproteins occurs within the particle and proceeds by an ordered pathway, called maturation. First, the protease (PR) is released by autocatalytic cleavage of the Gag-Pol polyprotein, and this cleavage is a prerequisite for subsequent processing at the remaining sites to release the mature structural and catalytic proteins. Maturation takes place prior to the RT reaction and is required to produce transposition-competent VLPs.

The protein resides in the cytoplasm. It localises to the nucleus. It carries out the reaction DNA(n) + a 2'-deoxyribonucleoside 5'-triphosphate = DNA(n+1) + diphosphate. The catalysed reaction is Endonucleolytic cleavage to 5'-phosphomonoester.. Its function is as follows. Capsid protein (CA) is the structural component of the virus-like particle (VLP), forming the shell that encapsulates the retrotransposons dimeric RNA genome. The particles are assembled from trimer-clustered units and there are holes in the capsid shells that allow for the diffusion of macromolecules. CA also has nucleocapsid-like chaperone activity, promoting primer tRNA(i)-Met annealing to the multipartite primer-binding site (PBS), dimerization of Ty2 RNA and initiation of reverse transcription. In terms of biological role, the aspartyl protease (PR) mediates the proteolytic cleavages of the Gag and Gag-Pol polyproteins after assembly of the VLP. Reverse transcriptase/ribonuclease H (RT) is a multifunctional enzyme that catalyzes the conversion of the retro-elements RNA genome into dsDNA within the VLP. The enzyme displays a DNA polymerase activity that can copy either DNA or RNA templates, and a ribonuclease H (RNase H) activity that cleaves the RNA strand of RNA-DNA heteroduplexes during plus-strand synthesis and hydrolyzes RNA primers. The conversion leads to a linear dsDNA copy of the retrotransposon that includes long terminal repeats (LTRs) at both ends. Functionally, integrase (IN) targets the VLP to the nucleus, where a subparticle preintegration complex (PIC) containing at least integrase and the newly synthesized dsDNA copy of the retrotransposon must transit the nuclear membrane. Once in the nucleus, integrase performs the integration of the dsDNA into the host genome. The sequence is that of Transposon Ty2-F Gag-Pol polyprotein (TY2B-F) from Saccharomyces cerevisiae (strain ATCC 204508 / S288c) (Baker's yeast).